Here is a 335-residue protein sequence, read N- to C-terminus: MKLVDAYVFLEELGSLLYKLLEQRDKLREEGYPVPGREVATPLVKYGFVSMLKGGVIMDVTNPEQAIIAEEAGAVGVMVLDKLPYDVRMAGGVARTADVKVIEEVMSSITIPVSAKCRIGHEFEARVLEEVGVDLIDESEVLTPVDEKAHINKWLFKTPFVNGARSLPEALRRIYEGASMIRTKGEPGTGNVAEAVKHIKIVNRDIYMLNGYYRNGDVEAIWVYSKENRVPYELALLTARLGRLPVVNFAAGGIATPADAALMMWLGADGVFVGSGIFKSNDPEARARGIVLATTYWDDPETVLEAQKMVSEKASMLGIDIRRLKPEELMQERGV.

Position 59 (Asp59) interacts with D-ribose 5-phosphate. Lys116 (schiff-base intermediate with D-ribose 5-phosphate) is an active-site residue. Gly188 contacts D-ribose 5-phosphate. Lys200 serves as a coordination point for D-glyceraldehyde 3-phosphate. Residues Gly253 and 274 to 275 each bind D-ribose 5-phosphate; that span reads GS.

Belongs to the PdxS/SNZ family. As to quaternary structure, in the presence of PdxT, forms a dodecamer of heterodimers.

The catalysed reaction is aldehydo-D-ribose 5-phosphate + D-glyceraldehyde 3-phosphate + L-glutamine = pyridoxal 5'-phosphate + L-glutamate + phosphate + 3 H2O + H(+). It participates in cofactor biosynthesis; pyridoxal 5'-phosphate biosynthesis. Catalyzes the formation of pyridoxal 5'-phosphate from ribose 5-phosphate (RBP), glyceraldehyde 3-phosphate (G3P) and ammonia. The ammonia is provided by the PdxT subunit. Can also use ribulose 5-phosphate and dihydroxyacetone phosphate as substrates, resulting from enzyme-catalyzed isomerization of RBP and G3P, respectively. The protein is Pyridoxal 5'-phosphate synthase subunit PdxS of Desulfurococcus amylolyticus (strain DSM 18924 / JCM 16383 / VKM B-2413 / 1221n) (Desulfurococcus kamchatkensis).